The primary structure comprises 449 residues: Phosphoglucosamine mutase (449 aa).

The active-site Phosphoserine intermediate is Ser104. Residues Ser104, Asp243, Asp245, and Asp247 each contribute to the Mg(2+) site. Position 104 is a phosphoserine (Ser104).

It belongs to the phosphohexose mutase family. The cofactor is Mg(2+). Activated by phosphorylation.

The enzyme catalyses alpha-D-glucosamine 1-phosphate = D-glucosamine 6-phosphate. Its function is as follows. Catalyzes the conversion of glucosamine-6-phosphate to glucosamine-1-phosphate. This is Phosphoglucosamine mutase from Xanthomonas axonopodis pv. citri (strain 306).